A 156-amino-acid polypeptide reads, in one-letter code: ATP synthase subunit b (156 aa).

The helical transmembrane segment at 4–26 (GATFWGPMISFALFVWFTMKYVW) threads the bilayer.

The protein belongs to the ATPase B chain family. As to quaternary structure, F-type ATPases have 2 components, F(1) - the catalytic core - and F(0) - the membrane proton channel. F(1) has five subunits: alpha(3), beta(3), gamma(1), delta(1), epsilon(1). F(0) has three main subunits: a(1), b(2) and c(10-14). The alpha and beta chains form an alternating ring which encloses part of the gamma chain. F(1) is attached to F(0) by a central stalk formed by the gamma and epsilon chains, while a peripheral stalk is formed by the delta and b chains.

It localises to the cell inner membrane. Functionally, f(1)F(0) ATP synthase produces ATP from ADP in the presence of a proton or sodium gradient. F-type ATPases consist of two structural domains, F(1) containing the extramembraneous catalytic core and F(0) containing the membrane proton channel, linked together by a central stalk and a peripheral stalk. During catalysis, ATP synthesis in the catalytic domain of F(1) is coupled via a rotary mechanism of the central stalk subunits to proton translocation. Component of the F(0) channel, it forms part of the peripheral stalk, linking F(1) to F(0). This Alkalilimnicola ehrlichii (strain ATCC BAA-1101 / DSM 17681 / MLHE-1) protein is ATP synthase subunit b.